The following is a 257-amino-acid chain: MSRYLGPRLRVIRRIGKLRGFTRKKPFRRVFKGFGGFKGKVIPPGQHGLTKLLKTRPYDSSESDYLIRLKVKQRLRFNYGITERQLVNYVRKAKKIKESTGQVLLQFLEMRLDNIVFRLNMAPTIPAARQLISHGHIRVNNKKVNIPSYMCKPKDVISVAMKQRSLQLVNKNLQEYYRRMRFYKKRLEKTLPFILLKIKPLGLTSVTAAVELITKGNVRVNNKSVKTPNYICRPRDTVSLRTKQGIKKVFLKNYLKG.

S4 RNA-binding domains follow at residues 110-170 and 189-255; these read MRLD…QLVN and KTLP…KNYL.

Belongs to the universal ribosomal protein uS4 family. As to quaternary structure, part of the 30S ribosomal subunit. Contacts protein S5. The interaction surface between S4 and S5 is involved in control of translational fidelity.

The protein localises to the plastid. The protein resides in the chloroplast. Its function is as follows. One of the primary rRNA binding proteins, it binds directly to 16S rRNA where it nucleates assembly of the body of the 30S subunit. In terms of biological role, with S5 and S12 plays an important role in translational accuracy. This is Small ribosomal subunit protein uS4c (rps4) from Chlamydomonas reinhardtii (Chlamydomonas smithii).